The primary structure comprises 2231 residues: Helicase SEN1 (2231 aa).

The segment covering 1 to 17 (MNSNNPDNNNSNNINNN) has biased composition (low complexity). Disordered stretches follow at residues 1-24 (MNSN…KDIA) and 1032-1061 (HPPS…SDND). Residues glutamine 1339 and 1360–1364 (GTGKT) each bind ATP. Residues 1491-1511 (ELRGKLDSESGNPESPMSTED) are disordered. Residues 1499-1510 (ESGNPESPMSTE) show a composition bias toward polar residues. Residues glutamine 1619, tyrosine 1655, and glutamate 1787 each contribute to the ATP site. Disordered stretches follow at residues 1894 to 1993 (ITQG…AVVG) and 2032 to 2231 (QLGL…KPRS). The Nuclear localization signal motif lies at 1909-1927 (KRRVVDEGEEADKAVKKKK). The segment covering 1923–1937 (VKKKKKEKKKEKKKS) has biased composition (basic residues). The span at 1938-1950 (KADDKKKNNKKAE) shows a compositional bias: basic and acidic residues. Positions 2048-2058 (NNEDDDDEDDY) are enriched in acidic residues. 2 stretches are compositionally biased toward polar residues: residues 2060-2088 (PSIS…NFSA) and 2095-2104 (QVSQAKQTQV). Positions 2114–2123 (SNSVLSGGSS) are enriched in low complexity. The span at 2134–2160 (PNQNGQNGANRTLSQHVGNANQYSTAP) shows a compositional bias: polar residues. Residues 2210–2220 (RNSSRRNASSS) show a composition bias toward low complexity.

This sequence belongs to the DNA2/NAM7 helicase family. Interacts with RAD2, RNT1 and RPB1. Binds to multiple snoRNAs.

Its subcellular location is the nucleus. ATP-dependent 5'-&gt;3' DNA/RNA helicase required for the expression and maturation of diverse classes of non-protein-coding RNAs like precursor tRNAs, rRNAs and small nuclear (snRNA) and nucleolar (snoRNA) RNAs. Directs RNA polymerase II transcription termination on snoRNAs as well as on several short protein-coding genes. May also play a role in transcription-coupled nucleotide excision repair. The chain is Helicase SEN1 (SEN1) from Saccharomyces cerevisiae (strain ATCC 204508 / S288c) (Baker's yeast).